The sequence spans 481 residues: ATP synthase subunit beta, chloroplastic (481 aa).

162–169 (GGAGVGKT) provides a ligand contact to ATP.

Belongs to the ATPase alpha/beta chains family. As to quaternary structure, F-type ATPases have 2 components, CF(1) - the catalytic core - and CF(0) - the membrane proton channel. CF(1) has five subunits: alpha(3), beta(3), gamma(1), delta(1), epsilon(1). CF(0) has four main subunits: a(1), b(1), b'(1) and c(9-12).

The protein localises to the plastid. The protein resides in the chloroplast thylakoid membrane. It catalyses the reaction ATP + H2O + 4 H(+)(in) = ADP + phosphate + 5 H(+)(out). Produces ATP from ADP in the presence of a proton gradient across the membrane. The catalytic sites are hosted primarily by the beta subunits. This is ATP synthase subunit beta, chloroplastic from Oltmannsiellopsis viridis (Marine flagellate).